The primary structure comprises 478 residues: ATP synthase subunit beta (478 aa).

151-158 (GGAGVGKT) contacts ATP.

This sequence belongs to the ATPase alpha/beta chains family. F-type ATPases have 2 components, CF(1) - the catalytic core - and CF(0) - the membrane proton channel. CF(1) has five subunits: alpha(3), beta(3), gamma(1), delta(1), epsilon(1). CF(0) has three main subunits: a(1), b(2) and c(9-12). The alpha and beta chains form an alternating ring which encloses part of the gamma chain. CF(1) is attached to CF(0) by a central stalk formed by the gamma and epsilon chains, while a peripheral stalk is formed by the delta and b chains.

Its subcellular location is the cell inner membrane. It carries out the reaction ATP + H2O + 4 H(+)(in) = ADP + phosphate + 5 H(+)(out). In terms of biological role, produces ATP from ADP in the presence of a proton gradient across the membrane. The catalytic sites are hosted primarily by the beta subunits. In Azorhizobium caulinodans (strain ATCC 43989 / DSM 5975 / JCM 20966 / LMG 6465 / NBRC 14845 / NCIMB 13405 / ORS 571), this protein is ATP synthase subunit beta.